The chain runs to 375 residues: MSESAPTPRRERVIVGMSGGVDSSVSALLLLQQGYQVEGLFMKNWDEDDGTEYCTAREDLADAQAVCDRIGIKLHTANFAAEYWDNVFEHFLAEYKAGRTPNPDILCNREIKFKAFLDYALMLGADLIATGHYVRRRDRDGRTELLKGLDPNKDQSYFLHAVGGEQIARSLFPVGELEKPEVRAIAEKHGLATAKKKDSTGICFIGERRFTDFLKQYLPAQPGDIETIEGKVIGRHSGLMYHTIGQRQGLGIGGLKEAGDDPWYVLGKDLQRNVLLVGQGNDHPLLFSRALLASRIYWVNPVELERPRRLRAKVRYRQSDQDCVLEKTAEGYRAVFDEPQRAVTPGQSVVFYDGDVCLGGGVIETAEAWDFGGRP.

ATP is bound by residues 16–23 and M42; that span reads GMSGGVDS. The segment at 102–104 is interaction with target base in tRNA; that stretch reads NPD. C107 (nucleophile) is an active-site residue. The cysteines at positions 107 and 203 are disulfide-linked. An ATP-binding site is contributed by G131. The segment at 153 to 155 is interaction with tRNA; the sequence is KDQ. Catalysis depends on C203, which acts as the Cysteine persulfide intermediate. The tract at residues 315–316 is interaction with tRNA; that stretch reads RY.

The protein belongs to the MnmA/TRMU family.

The protein resides in the cytoplasm. It carries out the reaction S-sulfanyl-L-cysteinyl-[protein] + uridine(34) in tRNA + AH2 + ATP = 2-thiouridine(34) in tRNA + L-cysteinyl-[protein] + A + AMP + diphosphate + H(+). Its function is as follows. Catalyzes the 2-thiolation of uridine at the wobble position (U34) of tRNA, leading to the formation of s(2)U34. This is tRNA-specific 2-thiouridylase MnmA from Pseudomonas aeruginosa (strain LESB58).